Consider the following 172-residue polypeptide: Centrin-1 (172 aa).

Positions 1–30 (MASSYRKPTVASTSQKRKVGPKPELTEEQK) are disordered. EF-hand domains are found at residues 28–63 (EQKQEVREAFDLFDADGSGTIDVKELKVAMRALGFE), 64–99 (PRKEEMKRMIADVDKEGTGKISFNDFLAVMTQKMAE), 101–136 (DTKEEILKAFRLFDDDETGKISFKNLKRVAKELGEN), and 137–172 (LTDEELQEMIDEADRDGDGEVNEDEFLRIMKKTNLY). D41, D43, S45, T47, and E52 together coordinate Ca(2+). Ca(2+)-binding residues include D150, D152, D154, E156, and E161.

The protein belongs to the centrin family. Monomer. Interacts with CIMAP3. Interacts with USP49.

It is found in the cytoplasm. It localises to the cytoskeleton. The protein localises to the microtubule organizing center. The protein resides in the centrosome. Plays a fundamental role in microtubule-organizing center structure and function. Plays a role in sperm cilia formation. This Bos taurus (Bovine) protein is Centrin-1 (CETN1).